Here is a 683-residue protein sequence, read N- to C-terminus: ATP-dependent zinc metalloprotease FtsH (683 aa).

The interval 1 to 43 (MEDKNIKDDEILDDQNDNQEDVQNQDEEKEIKPKKPKKKVYIS) is disordered. At 1-70 (MEDKNIKDDE…KNNNISFRVK (70 aa)) the chain is on the cytoplasmic side. Positions 10–28 (EILDDQNDNQEDVQNQDEE) are enriched in acidic residues. Residues 71–91 (PPIFFFLILILMSTLFYFYGN) form a helical membrane-spanning segment. Topologically, residues 92 to 174 (KTALFQEKRE…IVVLGTPVSS (83 aa)) are periplasmic. The chain crosses the membrane as a helical span at residues 175-195 (IITRAIFSFAPLFMLLFFFYF). The Cytoplasmic segment spans residues 196–683 (INKKMMGSSG…LDDEQLEKYY (488 aa)). 270-277 (GEPGTGKT) is a binding site for ATP. Position 494 (His-494) interacts with Zn(2+). The active site involves Glu-495. Zn(2+) is bound by residues His-498 and Asp-569.

This sequence in the central section; belongs to the AAA ATPase family. It in the C-terminal section; belongs to the peptidase M41 family. In terms of assembly, homohexamer. Zn(2+) serves as cofactor.

It localises to the cell inner membrane. Acts as a processive, ATP-dependent zinc metallopeptidase for both cytoplasmic and membrane proteins. Plays a role in the quality control of integral membrane proteins. In Streptobacillus moniliformis (strain ATCC 14647 / DSM 12112 / NCTC 10651 / 9901), this protein is ATP-dependent zinc metalloprotease FtsH.